Here is a 509-residue protein sequence, read N- to C-terminus: Ribonuclease Y (509 aa).

The chain crosses the membrane as a helical span at residues 5–25; sequence IIILLSVFCGIFFICFIICSS. Residues 199 to 259 form the KH domain; the sequence is TTNIVKLPSD…IRREIATRTL (61 aa). The region spanning 325–418 is the HD domain; that stretch reads VLAHSIEVAK…VAIADSISAS (94 aa).

This sequence belongs to the RNase Y family.

Its subcellular location is the cell membrane. Functionally, endoribonuclease that initiates mRNA decay. This chain is Ribonuclease Y, found in Mycoplasma mycoides subsp. mycoides SC (strain CCUG 32753 / NCTC 10114 / PG1).